The following is a 110-amino-acid chain: Large ribosomal subunit protein uL22 (110 aa).

The protein belongs to the universal ribosomal protein uL22 family. In terms of assembly, part of the 50S ribosomal subunit.

Its function is as follows. This protein binds specifically to 23S rRNA; its binding is stimulated by other ribosomal proteins, e.g. L4, L17, and L20. It is important during the early stages of 50S assembly. It makes multiple contacts with different domains of the 23S rRNA in the assembled 50S subunit and ribosome. In terms of biological role, the globular domain of the protein is located near the polypeptide exit tunnel on the outside of the subunit, while an extended beta-hairpin is found that lines the wall of the exit tunnel in the center of the 70S ribosome. This chain is Large ribosomal subunit protein uL22, found in Colwellia psychrerythraea (strain 34H / ATCC BAA-681) (Vibrio psychroerythus).